A 206-amino-acid chain; its full sequence is GDT1-like protein sll0615 (206 aa).

5 helical membrane-spanning segments follow: residues 36-56 (WVLVGVVGGLAAMTILSVLMG), 58-78 (IFTFLPTRYINYAEVALFLIF), 114-134 (IVPRGWGIVVESFALTFVAEW), 151-171 (AWGVSAGAILGHTICAVIAVM), and 185-205 (VTLIGGLLFYLFAVVSWWTKI).

It belongs to the GDT1 family.

It is found in the cell membrane. The polypeptide is GDT1-like protein sll0615 (Synechocystis sp. (strain ATCC 27184 / PCC 6803 / Kazusa)).